The primary structure comprises 150 residues: MGKSILLINGPNLNLLGTREPQIYGSTTLADVEASCKAHAESLGATLATFQSNHEGAIIDRIQAARGNVDGIVINPGAFTHTSVAIRDALLGVGIPFIELHVSNVHAREPWRHHSYFSDKAAGIIVGLGVYGYKVAVEHVALNFKERAIL.

Catalysis depends on Tyr-24, which acts as the Proton acceptor. Substrate contacts are provided by Asn-75, His-81, and Asp-88. The active-site Proton donor is the His-101. Residues Val-102–Ser-103 and Arg-112 each bind substrate.

This sequence belongs to the type-II 3-dehydroquinase family. Homododecamer. Adopts a ring-like structure, composed of an arrangement of two hexameric rings stacked on top of one another.

It carries out the reaction 3-dehydroquinate = 3-dehydroshikimate + H2O. It participates in aromatic compound metabolism; 3,4-dihydroxybenzoate biosynthesis; 3,4-dihydroxybenzoate from 3-dehydroquinate: step 1/2. Its function is as follows. Is involved in the catabolism of quinate. Allows the utilization of quinate as carbon source via the beta-ketoadipate pathway. This chain is Catabolic 3-dehydroquinase 1, found in Neosartorya fischeri (strain ATCC 1020 / DSM 3700 / CBS 544.65 / FGSC A1164 / JCM 1740 / NRRL 181 / WB 181) (Aspergillus fischerianus).